Consider the following 582-residue polypeptide: Probable inorganic phosphate transporter 1-9 (582 aa).

At 1–23 the chain is on the cytoplasmic side; that stretch reads MAPRIRVLAALDQARTQYYHFKA. The helical transmembrane segment at 24–44 threads the bilayer; it reads IVIAGMGLFTDSYDLFCISPV. Over 45–75 the chain is Extracellular; that stretch reads MKIFGRVYYAPSGSVDGSGSGPGVTPPAVVS. The chain crosses the membrane as a helical span at residues 76-96; that stretch reads ATVGVALLGAVAGNVVFGALG. At 97–103 the chain is on the cytoplasmic side; that stretch reads DRVGRRR. Residues 104–124 traverse the membrane as a helical segment; sequence VYGACLLLMVCSSVGSGLSVC. At 125–130 the chain is on the extracellular side; that stretch reads RTRRCA. A helical membrane pass occupies residues 131 to 151; sequence LASLCFFRFLLGVGVGGDYPL. The Cytoplasmic portion of the chain corresponds to 152–165; the sequence is SATIMSEFANRRTR. The chain crosses the membrane as a helical span at residues 166-186; that stretch reads GAFIAAVFSMQGFGILVSSAV. At 187–210 the chain is on the extracellular side; that stretch reads TMAVAAAFDHYTGYPAPLDTPECA. Residues 211–231 traverse the membrane as a helical segment; it reads DLAWRIILMAGAVPAALTYYW. The Cytoplasmic segment spans residues 232-307; sequence RMSMPETARY…RRFVRQHGRD (76 aa). Residues 308-328 traverse the membrane as a helical segment; it reads LFACAAAWFLLDIPYYSSTLF. Residues 329–354 are Extracellular-facing; sequence QSQIYRPWFPPAAKVNAFQEAFNVAK. The chain crosses the membrane as a helical span at residues 355 to 375; that stretch reads FQAVIAVASTIPGYFAAMLLI. Topologically, residues 376 to 385 are cytoplasmic; it reads ERAGRRRLQM. The chain crosses the membrane as a helical span at residues 386–406; that stretch reads AGFLLMAVFLFALAGPYDGYW. The Extracellular segment spans residues 407–415; the sequence is RDHAKTAGY. Residues 416–436 traverse the membrane as a helical segment; the sequence is IVLYSLTFFSANLGPNTTTFI. The Cytoplasmic portion of the chain corresponds to 437–451; that stretch reads LPAELFPARFRSTCH. The chain crosses the membrane as a helical span at residues 452 to 472; sequence GLSGAAGKLGALVGSIGFLWA. The Extracellular portion of the chain corresponds to 473 to 485; sequence SQQKDGAAAGHLP. The helical transmembrane segment at 486-506 threads the bilayer; it reads GIGMMYALFVLGGICLLGLAL. At 507-582 the chain is on the cytoplasmic side; sequence TYAFTPETMT…SPILPHRMSL (76 aa). The interval 519-541 is disordered; it reads LEENESSVQAQSQVGDGGSDAGN.

Belongs to the major facilitator superfamily. Phosphate:H(+) symporter (TC 2.A.1.9) family. Expressed at low levels in roots.

It localises to the membrane. High-affinity transporter for external inorganic phosphate. The chain is Probable inorganic phosphate transporter 1-9 (PHT1-9) from Oryza sativa subsp. japonica (Rice).